We begin with the raw amino-acid sequence, 693 residues long: Auxin response factor 10 (693 aa).

Residues 115–217 constitute a DNA-binding region (TF-B3); that stretch reads FAKTLTQSDA…DLCVGIRRAK (103 aa). The PB1 domain maps to 580–668; that stretch reads TGHCKVFMES…DIGGDNVRKT (89 aa).

It belongs to the ARF family. Homodimers and heterodimers. In terms of tissue distribution, expressed in the whole plant.

It is found in the nucleus. In terms of biological role, auxin response factors (ARFs) are transcriptional factors that bind specifically to the DNA sequence 5'-TGTCTC-3' found in the auxin-responsive promoter elements (AuxREs). Could act as transcriptional activator or repressor. Formation of heterodimers with Aux/IAA proteins may alter their ability to modulate early auxin response genes expression. This is Auxin response factor 10 (ARF10) from Arabidopsis thaliana (Mouse-ear cress).